The primary structure comprises 72 residues: MDLWVVILVGVLALLAGVALGFFIARKYMMNYLKKNPPINEQMLRMMMMQMGMKPSQKKINQMMKAMENQTK.

Residues W4–I24 traverse the membrane as a helical segment.

The protein belongs to the UPF0154 family.

Its subcellular location is the cell membrane. The chain is UPF0154 protein BLi02038/BL02936 from Bacillus licheniformis (strain ATCC 14580 / DSM 13 / JCM 2505 / CCUG 7422 / NBRC 12200 / NCIMB 9375 / NCTC 10341 / NRRL NRS-1264 / Gibson 46).